The sequence spans 355 residues: 3-dehydroquinate synthase (355 aa).

Residues 71-76 (EGEERK), 105-109 (GVVGD), 129-130 (TS), lysine 142, and lysine 151 each bind NAD(+). Residues glutamate 184, histidine 246, and histidine 263 each contribute to the Zn(2+) site.

Belongs to the sugar phosphate cyclases superfamily. Dehydroquinate synthase family. Requires NAD(+) as cofactor. Co(2+) serves as cofactor. It depends on Zn(2+) as a cofactor.

The protein resides in the cytoplasm. It carries out the reaction 7-phospho-2-dehydro-3-deoxy-D-arabino-heptonate = 3-dehydroquinate + phosphate. It functions in the pathway metabolic intermediate biosynthesis; chorismate biosynthesis; chorismate from D-erythrose 4-phosphate and phosphoenolpyruvate: step 2/7. In terms of biological role, catalyzes the conversion of 3-deoxy-D-arabino-heptulosonate 7-phosphate (DAHP) to dehydroquinate (DHQ). The protein is 3-dehydroquinate synthase of Streptococcus pneumoniae (strain ATCC BAA-255 / R6).